The chain runs to 239 residues: Ribonuclease 3 (239 aa).

An RNase III domain is found at 11–133; that stretch reads HAAIQKKLGY…MFAAVSFDAD (123 aa). E46 provides a ligand contact to Mg(2+). Residue D50 is part of the active site. Mg(2+)-binding residues include D119 and E122. E122 is a catalytic residue. Positions 160–230 constitute a DRBM domain; it reads DGKTALQEAL…AKEALKWLEE (71 aa).

This sequence belongs to the ribonuclease III family. As to quaternary structure, homodimer. Mg(2+) serves as cofactor.

The protein localises to the cytoplasm. It carries out the reaction Endonucleolytic cleavage to 5'-phosphomonoester.. Functionally, digests double-stranded RNA. Involved in the processing of primary rRNA transcript to yield the immediate precursors to the large and small rRNAs (23S and 16S). Also processes some mRNAs, and tRNAs when they are encoded in the rRNA operon. In terms of biological role, CRISPR (clustered regularly interspaced short palindromic repeat) is an adaptive immune system that provides protection against mobile genetic elements (viruses, transposable elements and conjugative plasmids). CRISPR clusters contain spacers, sequences complementary to antecedent mobile elements, and target invading nucleic acids. CRISPR clusters are transcribed and processed into CRISPR RNA (crRNA). In this organism endogenous ribonuclease 3 and Cas9 are required for correct coprocessing of pre-crRNA and the trans-encoded small RNA (tracrRNA). Cas9, crRNA and tracrRNA are required for cleavage of invading DNA. Complements pre-crRNA and tracrRNA coprocessing defects in an rnc deletion in S.pyogenes strain 370. The chain is Ribonuclease 3 from Neisseria meningitidis serogroup A / serotype 4A (strain DSM 15465 / Z2491).